We begin with the raw amino-acid sequence, 196 residues long: Dimiconin (196 aa).

The N-terminal stretch at 1–21 (MKTIIVVTIFGILTCAYPTDG) is a signal peptide. 2 N-linked (GlcNAc...) asparagine glycosylation sites follow: asparagine 62 and asparagine 187.

The protein belongs to the calycin superfamily. Triabin family. Salivary gland.

The protein localises to the secreted. In terms of biological role, inhibits the intrinsic blood coagulation pathway by blocking the activation of host coagulation factor XII (F12) but not the enzymatic activity of activated F12. This Triatoma dimidiata (Kissing bug) protein is Dimiconin.